Reading from the N-terminus, the 362-residue chain is uncharacterized protein (362 aa).

This is an uncharacterized protein from Escherichia coli (strain K12).